A 569-amino-acid chain; its full sequence is Carotenoid cleavage dioxygenase 8 homolog B, chloroplastic (569 aa).

The N-terminal 43 residues, 1–43 (MSPAMLQASSLCVSAALSGAASRPGRLASQGHQGKRAVAQPLA), are a transit peptide targeting the chloroplast. Residues 23-81 (RPGRLASQGHQGKRAVAQPLAASAVTEAAPPAPVVAPPARPVDAPRRRGGRGGGGGGGE) are disordered. The segment covering 52–62 (PPAPVVAPPAR) has biased composition (pro residues). Residues His251, His301, His368, and His558 each coordinate Fe cation.

It belongs to the carotenoid oxygenase family. Fe(2+) serves as cofactor. In terms of tissue distribution, expressed in parenchyma cells of the root stele, shoot apex, leaf buds, xylem parenchyma cells of the stem, inflorescences and panicles.

The protein localises to the plastid. It is found in the chloroplast. It carries out the reaction 9-cis-10'-apo-beta-carotenal + 2 O2 = (2E,4E,6E)-7-hydroxy-4-methylhepta-2,4,6-trienal + (11R)-carlactone. It catalyses the reaction all-trans-10'-apo-beta-carotenal + O2 = (2E,4E,6E)-4-methylocta-2,4,6-trienedial + 13-apo-beta-carotenone. Its function is as follows. Involved in strigolactones biosynthesis by cleaving the C(27) 9-cis-10'-apo-beta-carotenal produced by CCD7. Produces the C(19) carlactone and a C(8) hydroxyaldehyde. Also shows lower activity with all-trans-10'-apo-beta-carotenal producing a C(9) dialdehyde and the C(18) 13-apo-beta-carotenone. Strigolactones are hormones that inhibit tillering and shoot branching through the MAX-dependent pathway, contribute to the regulation of shoot architectural response to phosphate-limiting conditions and function as rhizosphere signal that stimulates hyphal branching of arbuscular mycorrhizal fungi and trigger seed germination of root parasitic weeds. This chain is Carotenoid cleavage dioxygenase 8 homolog B, chloroplastic (CCD8B), found in Oryza sativa subsp. japonica (Rice).